A 169-amino-acid chain; its full sequence is Peptide deformylase (169 aa).

Fe cation-binding residues include C91 and H133. E134 is an active-site residue. H137 provides a ligand contact to Fe cation.

This sequence belongs to the polypeptide deformylase family. The cofactor is Fe(2+).

The enzyme catalyses N-terminal N-formyl-L-methionyl-[peptide] + H2O = N-terminal L-methionyl-[peptide] + formate. Its function is as follows. Removes the formyl group from the N-terminal Met of newly synthesized proteins. Requires at least a dipeptide for an efficient rate of reaction. N-terminal L-methionine is a prerequisite for activity but the enzyme has broad specificity at other positions. This Salmonella agona (strain SL483) protein is Peptide deformylase.